Here is a 114-residue protein sequence, read N- to C-terminus: TYRO protein tyrosine kinase-binding protein (114 aa).

Positions 1–21 (MGALEPSWCLLFLPVLLTVGG) are cleaved as a signal peptide. The Extracellular segment spans residues 22-42 (LSPVQAQSDTFPRCDCSSVSP). A helical membrane pass occupies residues 43–63 (GVLAGIVLGDLVLTLLIALAV). Asp52 serves as a coordination point for Ca(2+). Residues 64–114 (YSLGRLVSRGQGTAEGTRKQHIAETESPYQELQGQRPEVYSDLNTQRQYYR) are Cytoplasmic-facing. The disordered stretch occupies residues 74-107 (QGTAEGTRKQHIAETESPYQELQGQRPEVYSDLN). An ITAM domain is found at 81 to 109 (RKQHIAETESPYQELQGQRPEVYSDLNTQ). Tyr92 and Tyr103 each carry phosphotyrosine.

Belongs to the TYROBP family. Homodimer; disulfide-linked. Homotrimer; disulfide-linked. Homotetramer; disulfide-linked. Homotrimers and homotetramers form when low levels of partner receptors are available and are competitive with assembly with interacting receptors. They may represent alternative oligomerization states or may be intermediates in the receptor assembly process. Binding of a metal cation aids in homooligomerization through coordination of the metal ion by the subunits of the oligomer. Interacts with TREM1. Interacts with TREM2. Interacts with TREM3. Interacts with CLECSF5. Interacts with CD300LB and CD300C2. Interacts with CD300E. Interacts (via ITAM domain) with SYK (via SH2 domains); activates SYK mediating neutrophil and macrophage integrin-mediated activation. Interacts (via transmembrane domain) with KLRK1 isoform 2 (via transmembrane domain); the interaction is required for KLRK1 NK cell surface expression and NK cell-mediated cytotoxicity. Interacts with KLRC2. Interacts with CD300H. Interacts with KLRD1. Interacts with KLRA4 and KLRA8. Post-translationally, tyrosine phosphorylated. Following ligand binding by associated receptors, tyrosine phosphorylated in the ITAM domain which leads to activation of additional tyrosine kinases and subsequent cell activation. Expressed on microglia (at protein level). Expressed on oligodendrocytes (at protein level). Expressed on macrophages and osteoclasts. Expressed on dendritic cells in liver, spleen, kidney and lung with highest levels in liver dendritic cells.

It localises to the cell membrane. Its function is as follows. Adapter protein which non-covalently associates with activating receptors found on the surface of a variety of immune cells to mediate signaling and cell activation following ligand binding by the receptors. TYROBP is tyrosine-phosphorylated in the ITAM domain following ligand binding by the associated receptors which leads to activation of additional tyrosine kinases and subsequent cell activation. Also has an inhibitory role in some cells. Non-covalently associates with activating receptors of the CD300 family to mediate cell activation. Also mediates cell activation through association with activating receptors of the CD200R family. Required for neutrophil activation mediated by integrin. Required for the activation of myeloid cells mediated by the CLEC5A/MDL1 receptor. Associates with natural killer (NK) cell receptors such as the KLRD1/KLRC2 heterodimer to mediate NK cell activation. Also associates non-covalently with the NK cell receptors KLRA4/LY49D and KLRA8/LY49H which leads to NK cell activation. Associates with TREM1 to mediate activation of neutrophils and monocytes. Associates with TREM2 on monocyte-derived dendritic cells to mediate up-regulation of chemokine receptor CCR7 and dendritic cell maturation and survival. Association with TREM2 mediates cytokine-induced formation of multinucleated giant cells which are formed by the fusion of macrophages. Stabilizes the TREM2 C-terminal fragment (TREM2-CTF) which is produced by TREM2 ectodomain shedding. In microglia, required with TREM2 for phagocytosis of apoptotic neurons. Required with ITGAM/CD11B in microglia to control production of microglial superoxide ions which promote the neuronal apoptosis that occurs during brain development. Promotes pro-inflammatory responses in microglia following nerve injury which accelerates degeneration of injured neurons. Positively regulates the expression of the IRAK3/IRAK-M kinase and IL10 production by liver dendritic cells and inhibits their T cell allostimulatory ability. Negatively regulates B cell proliferation. Required for CSF1-mediated osteoclast cytoskeletal organization. Positively regulates multinucleation during osteoclast development. The polypeptide is TYRO protein tyrosine kinase-binding protein (Mus musculus (Mouse)).